The sequence spans 460 residues: 3-isopropylmalate dehydratase large subunit (460 aa).

Residues cysteine 338, cysteine 398, and cysteine 401 each coordinate [4Fe-4S] cluster.

It belongs to the aconitase/IPM isomerase family. LeuC type 1 subfamily. Heterodimer of LeuC and LeuD. It depends on [4Fe-4S] cluster as a cofactor.

The enzyme catalyses (2R,3S)-3-isopropylmalate = (2S)-2-isopropylmalate. It functions in the pathway amino-acid biosynthesis; L-leucine biosynthesis; L-leucine from 3-methyl-2-oxobutanoate: step 2/4. In terms of biological role, catalyzes the isomerization between 2-isopropylmalate and 3-isopropylmalate, via the formation of 2-isopropylmaleate. The chain is 3-isopropylmalate dehydratase large subunit from Streptococcus thermophilus (strain ATCC BAA-250 / LMG 18311).